A 704-amino-acid chain; its full sequence is Preterpestacin I synthase tpcA (704 aa).

The tract at residues 1 to 329 (MEQLSYQSKL…CSACPRQNAW (329 aa)) is terpene cyclase. Asp96 lines the Mg(2+) pocket. Substrate-binding positions include Asp96, Asn231, 235–239 (SWERE), and 325–326 (RQ). A DDXXD 1 motif is present at residues 96 to 100 (DDGGE). Positions 231–239 (NDYFSWERE) match the NSE/DTE motif. A prenyltransferase region spans residues 330-688 (KDMSSQSLNG…MLRLCLAKLS (359 aa)). The tract at residues 361–380 (KDSSFFGSQPSDDEPSLSEV) is disordered. Residues Lys406, Arg409, and His438 each coordinate isopentenyl diphosphate. 2 residues coordinate Mg(2+): Asp445 and Asp449. A DDXXD 2 motif is present at residues 445-449 (DDLED). Arg454 contacts dimethylallyl diphosphate. Arg455 is a binding site for isopentenyl diphosphate. Dimethylallyl diphosphate-binding residues include Lys532, Thr533, Gln568, Asn575, Lys583, and Lys593.

This sequence in the N-terminal section; belongs to the terpene synthase family. The protein in the C-terminal section; belongs to the FPP/GGPP synthase family. In terms of assembly, hexamer. Requires Mg(2+) as cofactor.

The enzyme catalyses isopentenyl diphosphate + (2E,6E)-farnesyl diphosphate = (2E,6E,10E)-geranylgeranyl diphosphate + diphosphate. It catalyses the reaction isopentenyl diphosphate + (2E,6E,10E)-geranylgeranyl diphosphate = (2E,6E,10E,14E)-geranylfarnesyl diphosphate + diphosphate. The protein operates within secondary metabolite biosynthesis; terpenoid biosynthesis. Functionally, bifunctional terpene synthase; part of the gene cluster that mediates the biosynthesis of terpestacin. The bifunctional terpene synthase tpcA converts isopentenyl diphosphate (IPP) and dimethylallyl diphosphate (DMAPP) into the sesterterpene preterpestacin I. The C-terminal prenyltransferase (PT) domain of tpcA catalyzes formation of GFPP, whereas the N-terminal terpene cyclase (TC) domain catalyzes the cyclization of GFPP into preterpestacin I. The cytochrome P450 monooxygenase tpcB then hydroxylates preterpestacin I to yield 24-hydroxypreterpstacin I (renamed as preterpestacin II) whereas the cytochrome P450 monooxygenase tpcC further hydroxylates preterpestacin II to yield 16,17-dihydroxypreterpestacin II (renamed as preterpestacin III). Finally, the FAD-dependent monooxygenase tpcD converts preterpestacin III into terpestacin. This chain is Preterpestacin I synthase tpcA, found in Cochliobolus heterostrophus (strain C5 / ATCC 48332 / race O) (Southern corn leaf blight fungus).